The chain runs to 296 residues: Lipoyl synthase (296 aa).

[4Fe-4S] cluster contacts are provided by cysteine 37, cysteine 42, cysteine 48, cysteine 63, cysteine 67, cysteine 70, and serine 276. The region spanning 49-265 is the Radical SAM core domain; the sequence is WSKKHTTVMI…ERVAKTKGFL (217 aa).

This sequence belongs to the radical SAM superfamily. Lipoyl synthase family. It depends on [4Fe-4S] cluster as a cofactor.

It is found in the cytoplasm. It carries out the reaction [[Fe-S] cluster scaffold protein carrying a second [4Fe-4S](2+) cluster] + N(6)-octanoyl-L-lysyl-[protein] + 2 oxidized [2Fe-2S]-[ferredoxin] + 2 S-adenosyl-L-methionine + 4 H(+) = [[Fe-S] cluster scaffold protein] + N(6)-[(R)-dihydrolipoyl]-L-lysyl-[protein] + 4 Fe(3+) + 2 hydrogen sulfide + 2 5'-deoxyadenosine + 2 L-methionine + 2 reduced [2Fe-2S]-[ferredoxin]. The protein operates within protein modification; protein lipoylation via endogenous pathway; protein N(6)-(lipoyl)lysine from octanoyl-[acyl-carrier-protein]: step 2/2. Catalyzes the radical-mediated insertion of two sulfur atoms into the C-6 and C-8 positions of the octanoyl moiety bound to the lipoyl domains of lipoate-dependent enzymes, thereby converting the octanoylated domains into lipoylated derivatives. The sequence is that of Lipoyl synthase from Rickettsia peacockii (strain Rustic).